Reading from the N-terminus, the 153-residue chain is Superoxide dismutase [Cu-Zn] (153 aa).

Residue asparagine 24 is glycosylated (N-linked (GlcNAc...) asparagine). 3 residues coordinate Cu cation: histidine 47, histidine 49, and histidine 64. Cysteine 58 and cysteine 147 form a disulfide bridge. Zn(2+) is bound by residues histidine 64, histidine 72, histidine 81, and aspartate 84. Cu cation is bound at residue histidine 121. Residues 126–137 show a composition bias toward basic and acidic residues; the sequence is DLGRGGNEESKK. A disordered region spans residues 126 to 145; sequence DLGRGGNEESKKTGNAGPRP. Arginine 144 lines the substrate pocket.

The protein belongs to the Cu-Zn superoxide dismutase family. As to quaternary structure, homodimer. Cu cation is required as a cofactor. It depends on Zn(2+) as a cofactor.

The protein localises to the cytoplasm. The catalysed reaction is 2 superoxide + 2 H(+) = H2O2 + O2. Destroys radicals which are normally produced within the cells and which are toxic to biological systems. The polypeptide is Superoxide dismutase [Cu-Zn] (Humicola lutea).